The chain runs to 825 residues: Probable ATP-dependent RNA helicase DDX20 (825 aa).

Positions 27-50 (PVQAVEPTPASPWTQRTAHDIGGP) are disordered. Residues 63–91 (ADFESLLLSRPVLEGLRAAGFERPSPVQL) carry the Q motif motif. ATP is bound by residues Arg-85, Gln-90, 107 to 114 (AKSGTGKT), and 110 to 115 (GTGKTC). Positions 94-265 (IPLGRCGLDL…TRYMRDPTFV (172 aa)) constitute a Helicase ATP-binding domain. Ser-188 is modified (phosphoserine). A DEAD box motif is present at residues 212-215 (DEAD). Ser-270 is modified (phosphoserine). In terms of domain architecture, Helicase C-terminal spans 300 to 449 (HLQELFSKVP…PIPPGLMEEC (150 aa)). Polar residues-rich tracts occupy residues 465–475 (SPTVATQSPKK) and 484–504 (FQSQRTPGNQTPSPRNTSASA). Disordered stretches follow at residues 465–573 (SPTV…PGSL) and 642–753 (QMLV…EPQE). A phosphoserine mark is found at Ser-472, Ser-501, and Ser-506. The span at 508 to 518 (RPKHSKPKLPV) shows a compositional bias: basic residues. Over residues 547 to 571 (KNSVQTSVEDSSSNSQHQAKDSSPG) the composition is skewed to polar residues. Thr-552 is subject to Phosphothreonine. 7 positions are modified to phosphoserine: Ser-561, Ser-653, Ser-655, Ser-657, Ser-673, Ser-678, and Ser-679. The segment covering 646-668 (SSSQSGDSESDSDSCSSRTSSQS) has biased composition (low complexity). Phosphothreonine occurs at positions 689 and 706. Polar residues predominate over residues 698-711 (EQVQNGNDTPTQVE). Residues 733–744 (KQSRRNPARRSS) show a composition bias toward basic residues.

This sequence belongs to the DEAD box helicase family. DDX20 subfamily. Part of the core SMN complex that contains SMN1, GEMIN2/SIP1, DDX20/GEMIN3, GEMIN4, GEMIN5, GEMIN6, GEMIN7, GEMIN8 and STRAP/UNRIP. Part of the SMN-Sm complex that contains SMN1, GEMIN2/SIP1, DDX20/GEMIN3, GEMIN4, GEMIN5, GEMIN6, GEMIN7, GEMIN8, STRAP/UNRIP and the Sm proteins SNRPB, SNRPD1, SNRPD2, SNRPD3, SNRPE, SNRPF and SNRPG. Interacts with SMN1; the interaction is direct. Interacts with GEMIN4; the interaction is direct. Interacts with GEMIN5. Interacts with SNUPN; the interaction is direct. Interacts with PPP4R2. Interacts with FOXL2. Interacts with NANOS1 and PUM2.

It localises to the cytoplasm. The protein resides in the nucleus. It is found in the gem. The enzyme catalyses ATP + H2O = ADP + phosphate + H(+). It catalyses the reaction a ribonucleoside 5'-triphosphate + H2O = a ribonucleoside 5'-diphosphate + phosphate + H(+). Functionally, the SMN complex catalyzes the assembly of small nuclear ribonucleoproteins (snRNPs), the building blocks of the spliceosome, and thereby plays an important role in the splicing of cellular pre-mRNAs. Most spliceosomal snRNPs contain a common set of Sm proteins SNRPB, SNRPD1, SNRPD2, SNRPD3, SNRPE, SNRPF and SNRPG that assemble in a heptameric protein ring on the Sm site of the small nuclear RNA to form the core snRNP (Sm core). In the cytosol, the Sm proteins SNRPD1, SNRPD2, SNRPE, SNRPF and SNRPG are trapped in an inactive 6S pICln-Sm complex by the chaperone CLNS1A that controls the assembly of the core snRNP. To assemble core snRNPs, the SMN complex accepts the trapped 5Sm proteins from CLNS1A forming an intermediate. Binding of snRNA inside 5Sm triggers eviction of the SMN complex, thereby allowing binding of SNRPD3 and SNRPB to complete assembly of the core snRNP. May also play a role in the metabolism of small nucleolar ribonucleoprotein (snoRNPs). The sequence is that of Probable ATP-dependent RNA helicase DDX20 (Ddx20) from Mus musculus (Mouse).